The following is a 198-amino-acid chain: Recombination protein RecR (198 aa).

The C4-type zinc finger occupies 56 to 71 (CEICGNVSEQATCSIC). The Toprim domain maps to 79–174 (ALICVVEEAK…RVTRLASGLP (96 aa)).

This sequence belongs to the RecR family.

Its function is as follows. May play a role in DNA repair. It seems to be involved in an RecBC-independent recombinational process of DNA repair. It may act with RecF and RecO. The sequence is that of Recombination protein RecR from Leifsonia xyli subsp. xyli (strain CTCB07).